The sequence spans 291 residues: 4-hydroxy-tetrahydrodipicolinate synthase (291 aa).

Pyruvate is bound at residue threonine 44. The active-site Proton donor/acceptor is tyrosine 132. Lysine 160 acts as the Schiff-base intermediate with substrate in catalysis. Isoleucine 202 contributes to the pyruvate binding site.

Belongs to the DapA family. Homotetramer; dimer of dimers.

Its subcellular location is the cytoplasm. The enzyme catalyses L-aspartate 4-semialdehyde + pyruvate = (2S,4S)-4-hydroxy-2,3,4,5-tetrahydrodipicolinate + H2O + H(+). The protein operates within amino-acid biosynthesis; L-lysine biosynthesis via DAP pathway; (S)-tetrahydrodipicolinate from L-aspartate: step 3/4. Functionally, catalyzes the condensation of (S)-aspartate-beta-semialdehyde [(S)-ASA] and pyruvate to 4-hydroxy-tetrahydrodipicolinate (HTPA). The sequence is that of 4-hydroxy-tetrahydrodipicolinate synthase from Rhodospirillum centenum (strain ATCC 51521 / SW).